Here is a 158-residue protein sequence, read N- to C-terminus: Cyclic pyranopterin monophosphate synthase (158 aa).

Residues 75–77 (LCH) and 113–114 (ME) contribute to the substrate site. The active site involves Asp128.

Belongs to the MoaC family. In terms of assembly, homohexamer; trimer of dimers.

It carries out the reaction (8S)-3',8-cyclo-7,8-dihydroguanosine 5'-triphosphate = cyclic pyranopterin phosphate + diphosphate. It functions in the pathway cofactor biosynthesis; molybdopterin biosynthesis. Its function is as follows. Catalyzes the conversion of (8S)-3',8-cyclo-7,8-dihydroguanosine 5'-triphosphate to cyclic pyranopterin monophosphate (cPMP). The chain is Cyclic pyranopterin monophosphate synthase from Dinoroseobacter shibae (strain DSM 16493 / NCIMB 14021 / DFL 12).